Reading from the N-terminus, the 271-residue chain is uncharacterized protein (271 aa).

Residues M1–G202 are disordered. Positions P10–K23 are enriched in basic and acidic residues. Composition is skewed to low complexity over residues R33 to P50 and G59 to P73. A compositionally biased stretch (polar residues) spans T92–Q101. Positions L121–P142 are enriched in basic residues.

This is an uncharacterized protein from Homo sapiens (Human).